The following is a 344-amino-acid chain: N-acetyl-gamma-glutamyl-phosphate reductase (344 aa).

Cys150 is an active-site residue.

Belongs to the NAGSA dehydrogenase family. Type 1 subfamily.

It localises to the cytoplasm. It carries out the reaction N-acetyl-L-glutamate 5-semialdehyde + phosphate + NADP(+) = N-acetyl-L-glutamyl 5-phosphate + NADPH + H(+). The protein operates within amino-acid biosynthesis; L-arginine biosynthesis; N(2)-acetyl-L-ornithine from L-glutamate: step 3/4. Catalyzes the NADPH-dependent reduction of N-acetyl-5-glutamyl phosphate to yield N-acetyl-L-glutamate 5-semialdehyde. The sequence is that of N-acetyl-gamma-glutamyl-phosphate reductase from Pseudomonas entomophila (strain L48).